Consider the following 315-residue polypeptide: Probable cell division protein WhiA (315 aa).

The segment at residues serine 280 to threonine 313 is a DNA-binding region (H-T-H motif).

This sequence belongs to the WhiA family.

Involved in cell division and chromosome segregation. The protein is Probable cell division protein WhiA of Clostridium botulinum (strain Alaska E43 / Type E3).